The primary structure comprises 305 residues: UDP-3-O-acyl-N-acetylglucosamine deacetylase (305 aa).

H79, H238, and D242 together coordinate Zn(2+). The active-site Proton donor is the H265.

Belongs to the LpxC family. Zn(2+) is required as a cofactor.

The catalysed reaction is a UDP-3-O-[(3R)-3-hydroxyacyl]-N-acetyl-alpha-D-glucosamine + H2O = a UDP-3-O-[(3R)-3-hydroxyacyl]-alpha-D-glucosamine + acetate. The protein operates within glycolipid biosynthesis; lipid IV(A) biosynthesis; lipid IV(A) from (3R)-3-hydroxytetradecanoyl-[acyl-carrier-protein] and UDP-N-acetyl-alpha-D-glucosamine: step 2/6. Its function is as follows. Catalyzes the hydrolysis of UDP-3-O-myristoyl-N-acetylglucosamine to form UDP-3-O-myristoylglucosamine and acetate, the committed step in lipid A biosynthesis. The polypeptide is UDP-3-O-acyl-N-acetylglucosamine deacetylase (Haemophilus influenzae (strain PittEE)).